We begin with the raw amino-acid sequence, 106 residues long: MTTPRPSGLPSPYASDGSSANLADILERVLDKGVVIAGDIKINLLDIELLTIKLRLVVASVDRAKEMGIDWWESDPALSSRARGSELARENADLQRRIAELEGRTV.

The protein belongs to the gas vesicle GvpA family.

The protein resides in the gas vesicle. Its function is as follows. A minor component of the gas vesicle, might be involved in nucleating gas vesicle formation. Gas vesicles are hollow, gas filled proteinaceous nanostructures found in some microorganisms. It is not clear what function gas vesicles perform in soil bacteria. This Streptomyces sp. (strain CB03234) protein is Gas vesicle protein J.